The chain runs to 520 residues: Na(+)/H(+) antiporter NhaB (520 aa).

12 helical membrane-spanning segments follow: residues 27-49 (GFLILNPLVFWVSPFTAGWLLVI), 62-82 (YPLLPGGLLAVEALFIGMTSA), 97-117 (LLLIFMVAGIYFMKQLLLLIF), 120-140 (LLLGIRSKTLLSLAFCFAAAF), 144-164 (FLDALTVVAVVISVAVGFYGI), 202-222 (LMMHAGVGTALGGVMTMVGEP), 238-258 (FLLRVAPVSVPVFICGIVTCI), 303-323 (GLIGVWLITALALHLAEVGLI), 348-368 (TEALPFTALLTVFFAVVAVII), 391-411 (LFYLFNGLLSSISDNVFVGTV), 447-467 (ATPNGQAAFLFLLTSALAPLI), and 475-495 (VWMALPYTIVLTLVGLACVQF).

The protein belongs to the NhaB Na(+)/H(+) (TC 2.A.34) antiporter family.

The protein localises to the cell inner membrane. It carries out the reaction 2 Na(+)(in) + 3 H(+)(out) = 2 Na(+)(out) + 3 H(+)(in). Functionally, na(+)/H(+) antiporter that extrudes sodium in exchange for external protons. This chain is Na(+)/H(+) antiporter NhaB, found in Cronobacter sakazakii (strain ATCC BAA-894) (Enterobacter sakazakii).